A 479-amino-acid chain; its full sequence is MKGLFIRIVLAICLSLWAIDMVFPWQQIVRSKQNYHTTIQERQKLIVGTINNPVSYFIGTNGETGLEYELSKAFANYLNVDLEMFPLNSADALFQALAQGKIDIAAASLFYQQDRSEKFKLGPAYHAASWQLTYRKGERRPITLENLSGKLVIPANSALNNILLAKKEKYPSLTWETSELSQEELLFQVAEGKIDYTIATSTEVSVNQQIKPQIAIAFNVTDEFTVHWYLSDKGASELQAALLDFMNSAIENGLIARIEEKYFNHLNQFDYVDTRSYLNAIETVLPKYAPLFEKYKGDLDWHLLAAISYQESHWNPEATSPTGVRGMMMLTKATADRMNITNRLDPEQSIKAGSEYLHLLLKQMPDTILKEDRIWFALAAYNMGLGHLLDVRRLTKQLGGNPDNWLEVKKNLPLLAQKRYFTHLKYGYARGYEAFQYVENIRRYMNSIMNYYRLQQNQQDRYENENNDVISTQTQQEQR.

Residues 1–18 (MKGLFIRIVLAICLSLWA) form the signal peptide. A non-LT domain region spans residues 19–266 (IDMVFPWQQI…RIEEKYFNHL (248 aa)). Residues 267–479 (NQFDYVDTRS…ISTQTQQEQR (213 aa)) form an LT domain region. The active site involves Glu311.

The protein in the N-terminal section; belongs to the bacterial solute-binding protein 3 family. It in the C-terminal section; belongs to the transglycosylase Slt family.

It localises to the cell outer membrane. The catalysed reaction is Exolytic cleavage of the (1-&gt;4)-beta-glycosidic linkage between N-acetylmuramic acid (MurNAc) and N-acetylglucosamine (GlcNAc) residues in peptidoglycan, from either the reducing or the non-reducing ends of the peptidoglycan chains, with concomitant formation of a 1,6-anhydrobond in the MurNAc residue.. Murein-degrading enzyme that degrades murein glycan strands and insoluble, high-molecular weight murein sacculi, with the concomitant formation of a 1,6-anhydromuramoyl product. Lytic transglycosylases (LTs) play an integral role in the metabolism of the peptidoglycan (PG) sacculus. Their lytic action creates space within the PG sacculus to allow for its expansion as well as for the insertion of various structures such as secretion systems and flagella. This is Membrane-bound lytic murein transglycosylase F from Histophilus somni (strain 2336) (Haemophilus somnus).